We begin with the raw amino-acid sequence, 193 residues long: MGLTTANTTLVAPQPKGILDPRTGKPVGSDDAFFNDLNSELSDKGFIVTSADALITWARTGSLMWMTFGLACCAVEMMHISMPRYDAERFGIAPRASPRQSDVMIVAGTLTNKMAPALRKVYDQMPEPRYVISMGSCANGGGYYHYSYSVVRGCDRVVPVDIYVPGCPPTAEALLYGILMLQKKIRRTGTIER.

[4Fe-4S] cluster contacts are provided by cysteine 72, cysteine 73, cysteine 137, and cysteine 167.

It belongs to the complex I 20 kDa subunit family. In terms of assembly, NDH-1 is composed of 14 different subunits. Subunits NuoB, C, D, E, F, and G constitute the peripheral sector of the complex. Requires [4Fe-4S] cluster as cofactor.

The protein localises to the cell inner membrane. It catalyses the reaction a quinone + NADH + 5 H(+)(in) = a quinol + NAD(+) + 4 H(+)(out). In terms of biological role, NDH-1 shuttles electrons from NADH, via FMN and iron-sulfur (Fe-S) centers, to quinones in the respiratory chain. Couples the redox reaction to proton translocation (for every two electrons transferred, four hydrogen ions are translocated across the cytoplasmic membrane), and thus conserves the redox energy in a proton gradient. This Brucella anthropi (strain ATCC 49188 / DSM 6882 / CCUG 24695 / JCM 21032 / LMG 3331 / NBRC 15819 / NCTC 12168 / Alc 37) (Ochrobactrum anthropi) protein is NADH-quinone oxidoreductase subunit B.